A 323-amino-acid chain; its full sequence is Malate dehydrogenase (323 aa).

NAD(+) contacts are provided by residues 20–25 and D44; that span reads GAGRVG. Substrate is bound by residues R93 and R99. Residues N106 and 129–131 each bind NAD(+); that span reads VTN. 2 residues coordinate substrate: N131 and R162. The active-site Proton acceptor is the H186.

The protein belongs to the LDH/MDH superfamily. MDH type 3 family.

It carries out the reaction (S)-malate + NAD(+) = oxaloacetate + NADH + H(+). Catalyzes the reversible oxidation of malate to oxaloacetate. The protein is Malate dehydrogenase of Nostoc sp. (strain PCC 7120 / SAG 25.82 / UTEX 2576).